A 473-amino-acid polypeptide reads, in one-letter code: MKGVATDIGTIHFIGIGGIGMSGIAEVMHNLGYKVQGSDVAESYVVEGLRKRGIAVMIGHKAENLGDAAVVVTSTAIKRGNPEVELALEKRVPVVRRAEMLAELMRLKSTVAIAGTHGKTTTTSMVAALLDAGGVDPTVINGGIINSYGSNARLGASDWMVVEADESDGSFLRLDGTIAVVTNIDPEHLDHYGSFDKVKDCFVEFVENVPFYGAALLCIDHPEVQAIIPRVRDRKVVTYGFSAQADVRGDNVTPIPGGNRFDVVVRNRDGDTRRIEGVTLPMPGRHNVQNALAAIGVALEMNISDAIIATGFAKFGGVKRRFTKVGEVPVGDGVATVIDDYGHHPVEIRAVLAAAREGARAKVIAVVQPHRFTRLRDLMTEFQTAFNDADTVYVAPVYAAGEAPIDGVDAAALVAGLKQRGHRSAQVIAGPEALAATLAATIAADDMVICLGAGDITKWAAGLSEAIAKETAR.

An ATP-binding site is contributed by Gly115–Thr121.

It belongs to the MurCDEF family.

The protein localises to the cytoplasm. It catalyses the reaction UDP-N-acetyl-alpha-D-muramate + L-alanine + ATP = UDP-N-acetyl-alpha-D-muramoyl-L-alanine + ADP + phosphate + H(+). The protein operates within cell wall biogenesis; peptidoglycan biosynthesis. Its function is as follows. Cell wall formation. The chain is UDP-N-acetylmuramate--L-alanine ligase from Rhizorhabdus wittichii (strain DSM 6014 / CCUG 31198 / JCM 15750 / NBRC 105917 / EY 4224 / RW1) (Sphingomonas wittichii).